A 272-amino-acid polypeptide reads, in one-letter code: 3-methyl-2-oxobutanoate hydroxymethyltransferase (272 aa).

Residues aspartate 42 and aspartate 86 each contribute to the Mg(2+) site. 3-methyl-2-oxobutanoate is bound by residues 42–43 (DS), aspartate 86, and lysine 116. Glutamate 118 lines the Mg(2+) pocket. Glutamate 185 acts as the Proton acceptor in catalysis.

It belongs to the PanB family. Homodecamer; pentamer of dimers. It depends on Mg(2+) as a cofactor.

Its subcellular location is the cytoplasm. The enzyme catalyses 3-methyl-2-oxobutanoate + (6R)-5,10-methylene-5,6,7,8-tetrahydrofolate + H2O = 2-dehydropantoate + (6S)-5,6,7,8-tetrahydrofolate. Its pathway is cofactor biosynthesis; (R)-pantothenate biosynthesis; (R)-pantoate from 3-methyl-2-oxobutanoate: step 1/2. Functionally, catalyzes the reversible reaction in which hydroxymethyl group from 5,10-methylenetetrahydrofolate is transferred onto alpha-ketoisovalerate to form ketopantoate. The protein is 3-methyl-2-oxobutanoate hydroxymethyltransferase of Prochlorococcus marinus (strain MIT 9303).